Consider the following 264-residue polypeptide: S-adenosylmethionine decarboxylase proenzyme (264 aa).

Ser111 serves as the catalytic Schiff-base intermediate with substrate; via pyruvic acid. Ser111 carries the post-translational modification Pyruvic acid (Ser); by autocatalysis. The Proton acceptor; for processing activity role is filled by His116. Cys139 (proton donor; for catalytic activity) is an active-site residue.

This sequence belongs to the prokaryotic AdoMetDC family. Type 2 subfamily. Heterooctamer of four alpha and four beta chains arranged as a tetramer of alpha/beta heterodimers. The cofactor is pyruvate. Post-translationally, is synthesized initially as an inactive proenzyme. Formation of the active enzyme involves a self-maturation process in which the active site pyruvoyl group is generated from an internal serine residue via an autocatalytic post-translational modification. Two non-identical subunits are generated from the proenzyme in this reaction, and the pyruvate is formed at the N-terminus of the alpha chain, which is derived from the carboxyl end of the proenzyme. The post-translation cleavage follows an unusual pathway, termed non-hydrolytic serinolysis, in which the side chain hydroxyl group of the serine supplies its oxygen atom to form the C-terminus of the beta chain, while the remainder of the serine residue undergoes an oxidative deamination to produce ammonia and the pyruvoyl group blocking the N-terminus of the alpha chain.

It catalyses the reaction S-adenosyl-L-methionine + H(+) = S-adenosyl 3-(methylsulfanyl)propylamine + CO2. It functions in the pathway amine and polyamine biosynthesis; S-adenosylmethioninamine biosynthesis; S-adenosylmethioninamine from S-adenosyl-L-methionine: step 1/1. In terms of biological role, catalyzes the decarboxylation of S-adenosylmethionine to S-adenosylmethioninamine (dcAdoMet), the propylamine donor required for the synthesis of the polyamines spermine and spermidine from the diamine putrescine. The protein is S-adenosylmethionine decarboxylase proenzyme of Geobacillus thermodenitrificans (strain NG80-2).